Reading from the N-terminus, the 94-residue chain is Pyrimidine/purine nucleoside phosphorylase (94 aa).

Belongs to the nucleoside phosphorylase PpnP family.

It carries out the reaction a purine D-ribonucleoside + phosphate = a purine nucleobase + alpha-D-ribose 1-phosphate. The catalysed reaction is adenosine + phosphate = alpha-D-ribose 1-phosphate + adenine. It catalyses the reaction cytidine + phosphate = cytosine + alpha-D-ribose 1-phosphate. The enzyme catalyses guanosine + phosphate = alpha-D-ribose 1-phosphate + guanine. It carries out the reaction inosine + phosphate = alpha-D-ribose 1-phosphate + hypoxanthine. The catalysed reaction is thymidine + phosphate = 2-deoxy-alpha-D-ribose 1-phosphate + thymine. It catalyses the reaction uridine + phosphate = alpha-D-ribose 1-phosphate + uracil. The enzyme catalyses xanthosine + phosphate = alpha-D-ribose 1-phosphate + xanthine. Catalyzes the phosphorolysis of diverse nucleosides, yielding D-ribose 1-phosphate and the respective free bases. Can use uridine, adenosine, guanosine, cytidine, thymidine, inosine and xanthosine as substrates. Also catalyzes the reverse reactions. This Pectobacterium carotovorum subsp. carotovorum (strain PC1) protein is Pyrimidine/purine nucleoside phosphorylase.